The primary structure comprises 721 residues: Polyribonucleotide nucleotidyltransferase (721 aa).

2 residues coordinate Mg(2+): aspartate 495 and aspartate 501. In terms of domain architecture, KH spans 562-621; it reads PRLLSFRIDPELIGTVIGPGGRTIKGITERTNTKIDIEDGGIVTIASHDGAAAEAAQRII. An S1 motif domain is found at 631-699; sequence GEVFSGTITR…NRGRINLTLR (69 aa). Positions 700 to 721 are disordered; it reads GVPQNGEETQSEPAPTPVAPLN.

The protein belongs to the polyribonucleotide nucleotidyltransferase family. Mg(2+) is required as a cofactor.

It localises to the cytoplasm. The catalysed reaction is RNA(n+1) + phosphate = RNA(n) + a ribonucleoside 5'-diphosphate. Functionally, involved in mRNA degradation. Catalyzes the phosphorolysis of single-stranded polyribonucleotides processively in the 3'- to 5'-direction. The polypeptide is Polyribonucleotide nucleotidyltransferase (Prochlorococcus marinus (strain MIT 9303)).